We begin with the raw amino-acid sequence, 333 residues long: Glutamyl-tRNA reductase (333 aa).

Substrate-binding positions include T60–R63, S110, E115–E117, and Q121. The active-site Nucleophile is the C61. G189–N194 provides a ligand contact to NADP(+).

The protein belongs to the glutamyl-tRNA reductase family. As to quaternary structure, homodimer.

The catalysed reaction is (S)-4-amino-5-oxopentanoate + tRNA(Glu) + NADP(+) = L-glutamyl-tRNA(Glu) + NADPH + H(+). It functions in the pathway porphyrin-containing compound metabolism; protoporphyrin-IX biosynthesis; 5-aminolevulinate from L-glutamyl-tRNA(Glu): step 1/2. In terms of biological role, catalyzes the NADPH-dependent reduction of glutamyl-tRNA(Glu) to glutamate 1-semialdehyde (GSA). The sequence is that of Glutamyl-tRNA reductase from Chlamydia muridarum (strain MoPn / Nigg).